The chain runs to 84 residues: Putative antitoxin VapB37 (84 aa).

In terms of biological role, probable antitoxin component of a type II toxin-antitoxin (TA) system. Its putative cognate toxin is VapC37. The sequence is that of Putative antitoxin VapB37 (vapB37) from Mycobacterium tuberculosis (strain CDC 1551 / Oshkosh).